Here is a 158-residue protein sequence, read N- to C-terminus: 2-C-methyl-D-erythritol 2,4-cyclodiphosphate synthase (158 aa).

A divalent metal cation contacts are provided by Asp8 and His10. Residues 8-10 (DVH) and 34-35 (HS) each bind 4-CDP-2-C-methyl-D-erythritol 2-phosphate. His42 contributes to the a divalent metal cation binding site. 4-CDP-2-C-methyl-D-erythritol 2-phosphate contacts are provided by residues 56–58 (DIG), 61–65 (FPDTD), 100–106 (AQRPKMA), 132–135 (TTEE), Phe139, and Arg142.

It belongs to the IspF family. As to quaternary structure, homotrimer. It depends on a divalent metal cation as a cofactor.

The enzyme catalyses 4-CDP-2-C-methyl-D-erythritol 2-phosphate = 2-C-methyl-D-erythritol 2,4-cyclic diphosphate + CMP. It functions in the pathway isoprenoid biosynthesis; isopentenyl diphosphate biosynthesis via DXP pathway; isopentenyl diphosphate from 1-deoxy-D-xylulose 5-phosphate: step 4/6. In terms of biological role, involved in the biosynthesis of isopentenyl diphosphate (IPP) and dimethylallyl diphosphate (DMAPP), two major building blocks of isoprenoid compounds. Catalyzes the conversion of 4-diphosphocytidyl-2-C-methyl-D-erythritol 2-phosphate (CDP-ME2P) to 2-C-methyl-D-erythritol 2,4-cyclodiphosphate (ME-CPP) with a corresponding release of cytidine 5-monophosphate (CMP). This Pelobacter propionicus (strain DSM 2379 / NBRC 103807 / OttBd1) protein is 2-C-methyl-D-erythritol 2,4-cyclodiphosphate synthase.